Consider the following 199-residue polypeptide: Pyridoxine/pyridoxamine 5'-phosphate oxidase (199 aa).

Residues 44 to 49, 59 to 60, Lys66, and Gln91 each bind FMN; these read RTVLLK and YS. A substrate-binding site is contributed by Lys49. Substrate is bound by residues Tyr109, Arg113, and Ser117. Residues 126 to 127 and Trp171 contribute to the FMN site; that span reads QS. 177 to 179 lines the substrate pocket; sequence RLH. Arg181 provides a ligand contact to FMN.

The protein belongs to the pyridoxamine 5'-phosphate oxidase family. As to quaternary structure, homodimer. The cofactor is FMN.

It catalyses the reaction pyridoxamine 5'-phosphate + O2 + H2O = pyridoxal 5'-phosphate + H2O2 + NH4(+). The catalysed reaction is pyridoxine 5'-phosphate + O2 = pyridoxal 5'-phosphate + H2O2. It functions in the pathway cofactor metabolism; pyridoxal 5'-phosphate salvage; pyridoxal 5'-phosphate from pyridoxamine 5'-phosphate: step 1/1. It participates in cofactor metabolism; pyridoxal 5'-phosphate salvage; pyridoxal 5'-phosphate from pyridoxine 5'-phosphate: step 1/1. Its function is as follows. Catalyzes the oxidation of either pyridoxine 5'-phosphate (PNP) or pyridoxamine 5'-phosphate (PMP) into pyridoxal 5'-phosphate (PLP). The protein is Pyridoxine/pyridoxamine 5'-phosphate oxidase of Xanthomonas oryzae pv. oryzae (strain KACC10331 / KXO85).